The sequence spans 453 residues: Carbamoyl phosphate synthase arginine-specific small chain (453 aa).

The transit peptide at 1–28 (MFARVFKAMPARAPAFTSVNASIQSRFM) directs the protein to the mitochondrion. The region spanning 219 to 406 (HVAVIDCGVK…LDSVVKYKNH (188 aa)) is the Glutamine amidotransferase type-1 domain. Catalysis depends on C295, which acts as the Nucleophile. Active-site residues include H379 and E381.

It belongs to the CarA family. As to quaternary structure, heterodimer composed of 2 chains; the small (or glutamine) chain promotes the hydrolysis of glutamine to ammonia, which is used by the large (or ammonia) chain to synthesize carbamoyl phosphate.

It localises to the mitochondrion matrix. The catalysed reaction is hydrogencarbonate + L-glutamine + 2 ATP + H2O = carbamoyl phosphate + L-glutamate + 2 ADP + phosphate + 2 H(+). It carries out the reaction L-glutamine + H2O = L-glutamate + NH4(+). The protein operates within amino-acid biosynthesis; L-arginine biosynthesis; carbamoyl phosphate from bicarbonate: step 1/1. Small subunit of the arginine-specific carbamoyl phosphate synthase (CPSase). CPSase catalyzes the formation of carbamoyl phosphate from the ammonia moiety of glutamine, carbonate, and phosphate donated by ATP, the first step of the arginine biosynthetic pathway. The small subunit (glutamine amidotransferase) binds and cleaves glutamine to supply the large subunit with the substrate ammonia. The polypeptide is Carbamoyl phosphate synthase arginine-specific small chain (cpa1) (Aspergillus niger (strain ATCC MYA-4892 / CBS 513.88 / FGSC A1513)).